Here is a 771-residue protein sequence, read N- to C-terminus: DnaJ homolog subfamily C member 16 (771 aa).

The N-terminal stretch at 1–25 (MELKRLSISWQFLIVLVLILQSLSA) is a signal peptide. At 26-532 (LDFDPYRVLG…ESLLHSNWRE (507 aa)) the chain is on the cytoplasmic side. Residues 29 to 93 (DPYRVLGVSR…EKRTNYDHYG (65 aa)) form the J domain. A Thioredoxin domain is found at 116 to 244 (FYFDESFFHF…LRQFVESLLP (129 aa)). The helical; Anchor for type IV membrane protein transmembrane segment at 533 to 553 (MMPLLSLIFSALFILFGTVIV) threads the bilayer. At 554–771 (QAFSDSNEER…FYIPSWPELD (218 aa)) the chain is on the extracellular side. The interval 559–590 (SNEERESHPPDKEEVPEKAGKTEPSFTKESSS) is disordered. Residues 560-579 (NEERESHPPDKEEVPEKAGK) show a composition bias toward basic and acidic residues. Residue Asn-628 is glycosylated (N-linked (GlcNAc...) asparagine).

The protein localises to the endoplasmic reticulum membrane. Its function is as follows. Plays an important role in regulating the size of autophagosomes during the formation process. The protein is DnaJ homolog subfamily C member 16 (Dnajc16) of Rattus norvegicus (Rat).